The primary structure comprises 327 residues: Geranylgeranyl transferase type-2 subunit alpha (327 aa).

PFTA repeat units lie at residues Tyr44 to Ser78, Phe84 to Thr118, Val123 to Ser157, Leu163 to Gln197, and Tyr207 to Val241.

This sequence belongs to the protein prenyltransferase subunit alpha family. As to quaternary structure, heterodimer of an alpha and a beta subunit.

The enzyme catalyses geranylgeranyl diphosphate + L-cysteinyl-[protein] = S-geranylgeranyl-L-cysteinyl-[protein] + diphosphate. In terms of biological role, catalyzes the transfer of a geranyl-geranyl moiety from geranyl-geranyl pyrophosphate to proteins having the C-terminal -XCC or -XCXC, where both cysteines may become modified. Acts on YPT1 and SEC4. This Saccharomyces cerevisiae (strain ATCC 204508 / S288c) (Baker's yeast) protein is Geranylgeranyl transferase type-2 subunit alpha (BET4).